The sequence spans 439 residues: GTPase Der (439 aa).

2 EngA-type G domains span residues P4 to E168 and I177 to N352. GTP-binding positions include G10–S17, D57–I61, N120–D123, G183–S190, D230–L234, and N295–D298. One can recognise a KH-like domain in the interval K353 to K437.

This sequence belongs to the TRAFAC class TrmE-Era-EngA-EngB-Septin-like GTPase superfamily. EngA (Der) GTPase family. As to quaternary structure, associates with the 50S ribosomal subunit.

In terms of biological role, GTPase that plays an essential role in the late steps of ribosome biogenesis. This Clostridium botulinum (strain ATCC 19397 / Type A) protein is GTPase Der.